Here is a 122-residue protein sequence, read N- to C-terminus: Small ribosomal subunit protein uS13 (122 aa).

The disordered stretch occupies residues V98 to K122.

The protein belongs to the universal ribosomal protein uS13 family. Part of the 30S ribosomal subunit. Forms a loose heterodimer with protein S19. Forms two bridges to the 50S subunit in the 70S ribosome.

In terms of biological role, located at the top of the head of the 30S subunit, it contacts several helices of the 16S rRNA. In the 70S ribosome it contacts the 23S rRNA (bridge B1a) and protein L5 of the 50S subunit (bridge B1b), connecting the 2 subunits; these bridges are implicated in subunit movement. Contacts the tRNAs in the A and P-sites. The sequence is that of Small ribosomal subunit protein uS13 from Ruegeria pomeroyi (strain ATCC 700808 / DSM 15171 / DSS-3) (Silicibacter pomeroyi).